The sequence spans 160 residues: Small ribosomal subunit protein uS7 (160 aa).

It belongs to the universal ribosomal protein uS7 family. As to quaternary structure, part of the 30S ribosomal subunit. Contacts proteins S9 and S11.

In terms of biological role, one of the primary rRNA binding proteins, it binds directly to 16S rRNA where it nucleates assembly of the head domain of the 30S subunit. Is located at the subunit interface close to the decoding center, probably blocks exit of the E-site tRNA. This is Small ribosomal subunit protein uS7 from Rickettsia prowazekii (strain Madrid E).